The primary structure comprises 108 residues: UPF0060 membrane protein YnfA (108 aa).

At 1-5 (MLKTT) the chain is on the periplasmic side. The helical transmembrane segment at 6-26 (LLFFVTALCEIIGCFLTWLWI) threads the bilayer. Topologically, residues 27-30 (KRGA) are cytoplasmic. The helical transmembrane segment at 31–51 (SVWWLLPAAASLALFVWLLTL) threads the bilayer. Topologically, residues 52–60 (HPAASGRVY) are periplasmic. A helical membrane pass occupies residues 61 to 81 (AAYGGVYVCTALLWLRVVDGV). At 82–84 (RLT) the chain is on the cytoplasmic side. Residues 85–105 (VYDWCGAPIALCGMLIIVVGW) form a helical membrane-spanning segment. The Periplasmic portion of the chain corresponds to 106 to 108 (GRT).

Belongs to the UPF0060 family.

Its subcellular location is the cell inner membrane. The chain is UPF0060 membrane protein YnfA from Salmonella dublin (strain CT_02021853).